Consider the following 213-residue polypeptide: Small ribosomal subunit protein uS3 (213 aa).

Positions 38 to 106 (IRAFVKKLLY…EFSLEVNEIR (69 aa)) constitute a KH type-2 domain.

This sequence belongs to the universal ribosomal protein uS3 family. Part of the 30S ribosomal subunit. Forms a tight complex with proteins S10 and S14.

Its function is as follows. Binds the lower part of the 30S subunit head. Binds mRNA in the 70S ribosome, positioning it for translation. The chain is Small ribosomal subunit protein uS3 from Desulfovibrio desulfuricans (strain ATCC 27774 / DSM 6949 / MB).